A 92-amino-acid chain; its full sequence is Small ribosomal subunit protein uS19 (92 aa).

Belongs to the universal ribosomal protein uS19 family.

In terms of biological role, protein S19 forms a complex with S13 that binds strongly to the 16S ribosomal RNA. The polypeptide is Small ribosomal subunit protein uS19 (Gloeothece citriformis (strain PCC 7424) (Cyanothece sp. (strain PCC 7424))).